Here is a 1593-residue protein sequence, read N- to C-terminus: Autotransporter CRAC (1593 aa).

The first 54 residues, 1–54 (MNKVYNTVWNESTGMWVVTSELTRKGGRRPRQIRRTALAGLIAGLLLPSAPALA), serve as a signal peptide directing secretion. A compositionally biased stretch (polar residues) spans 65 to 85 (GATSSSMSLNAGDTATDTTIN). Disordered stretches follow at residues 65-100 (GATS…SATS) and 1267-1286 (KADS…PVPP). Low complexity predominate over residues 86 to 97 (SGGSQRVSSGGS). Over residues 1269-1280 (DSSQPGTDNPGT) the composition is skewed to polar residues. The Autotransporter domain maps to 1325–1593 (NTRSPGGVWG…TGSVGFRINF (269 aa)).

Post-translationally, glycosylated by heptosyltransferas BAHTCr. Glycosylation is required for adhesion to mammalian cells and colonization of the mouse host gastrointestinal tract.

It is found in the cell outer membrane. Autotransporter required for the colonization of the mouse host gastrointestinal tract, possibly by mediating bacteria adhesion to host cells. This chain is Autotransporter CRAC, found in Citrobacter rodentium (strain ICC168) (Citrobacter freundii biotype 4280).